Consider the following 406-residue polypeptide: Nicotinate phosphoribosyltransferase (406 aa).

His-225 carries the phosphohistidine; by autocatalysis modification.

This sequence belongs to the NAPRTase family. Transiently phosphorylated on a His residue during the reaction cycle. Phosphorylation strongly increases the affinity for substrates and increases the rate of nicotinate D-ribonucleotide production. Dephosphorylation regenerates the low-affinity form of the enzyme, leading to product release.

It catalyses the reaction nicotinate + 5-phospho-alpha-D-ribose 1-diphosphate + ATP + H2O = nicotinate beta-D-ribonucleotide + ADP + phosphate + diphosphate. Its pathway is cofactor biosynthesis; NAD(+) biosynthesis; nicotinate D-ribonucleotide from nicotinate: step 1/1. Functionally, catalyzes the synthesis of beta-nicotinate D-ribonucleotide from nicotinate and 5-phospho-D-ribose 1-phosphate at the expense of ATP. The protein is Nicotinate phosphoribosyltransferase of Psychromonas ingrahamii (strain DSM 17664 / CCUG 51855 / 37).